Consider the following 655-residue polypeptide: p-hydroxybenzoic acid efflux pump subunit AaeB (655 aa).

The next 11 membrane-spanning stretches (helical) occupy residues 13–33 (FAVKLACAIVLALFIGFHFQL), 38–58 (WAVLTAAIVAAGPAFAAGGEP), 69–89 (LRIIGTFIGCIAALIIIISMI), 93–113 (LLMILVCCVWAGFCTWISSLV), 121–141 (WGLSGYTALIIVITIQMEPLL), 152–172 (EIVIGIGCAILADLLFSPRSI), 370–390 (LFWLWTGWTSGNGAMVMIAVV), 407–427 (FIYGTLAALPLGLLYFLVIIP), 431–451 (QSMLLLCLSLAVLGFFIGIEV), 459–479 (MGALASTINIIVLDNPMTFHF), and 482–502 (FLDSALGQIVGCMLAFIVILL).

Belongs to the aromatic acid exporter ArAE (TC 2.A.85) family.

It is found in the cell inner membrane. Forms an efflux pump with AaeA. Could function as a metabolic relief valve, allowing to eliminate certain compounds when they accumulate to high levels in the cell. The chain is p-hydroxybenzoic acid efflux pump subunit AaeB from Salmonella heidelberg (strain SL476).